The primary structure comprises 190 residues: Pyridoxal 5'-phosphate synthase subunit PdxT (190 aa).

46-48 provides a ligand contact to L-glutamine; that stretch reads GES. Cys78 acts as the Nucleophile in catalysis. Residues Arg105 and 138–139 contribute to the L-glutamine site; that span reads IR. Catalysis depends on charge relay system residues His174 and Glu176.

It belongs to the glutaminase PdxT/SNO family. In terms of assembly, in the presence of PdxS, forms a dodecamer of heterodimers. Only shows activity in the heterodimer.

The enzyme catalyses aldehydo-D-ribose 5-phosphate + D-glyceraldehyde 3-phosphate + L-glutamine = pyridoxal 5'-phosphate + L-glutamate + phosphate + 3 H2O + H(+). It carries out the reaction L-glutamine + H2O = L-glutamate + NH4(+). The protein operates within cofactor biosynthesis; pyridoxal 5'-phosphate biosynthesis. Functionally, catalyzes the hydrolysis of glutamine to glutamate and ammonia as part of the biosynthesis of pyridoxal 5'-phosphate. The resulting ammonia molecule is channeled to the active site of PdxS. This is Pyridoxal 5'-phosphate synthase subunit PdxT from Bifidobacterium longum (strain NCC 2705).